Reading from the N-terminus, the 188-residue chain is MIAGISGRVLKKSGNVLLVETKSGVVFEIVCDVQTSEEVEEGGECFLHTFLSVSQDGITLYGFSNERKKELFLSLTKVSRLGPKTALKIISNEDAETLVTMIASQDVEGLSKLPGISKKTAERIVMELKDEFESAGIKDMRIYHESLEALISLGYPEKQAREAVKHVYREGMKTSELIKEALKFLSQR.

Residues 1-64 form a domain I region; that stretch reads MIAGISGRVL…QDGITLYGFS (64 aa). The segment at 65-143 is domain II; sequence NERKKELFLS…SAGIKDMRIY (79 aa). Residue tyrosine 143 is a region of interest, flexible linker. Residues 143–188 form a domain III region; it reads YHESLEALISLGYPEKQAREAVKHVYREGMKTSELIKEALKFLSQR.

Belongs to the RuvA family. As to quaternary structure, homotetramer. Forms an RuvA(8)-RuvB(12)-Holliday junction (HJ) complex. HJ DNA is sandwiched between 2 RuvA tetramers; dsDNA enters through RuvA and exits via RuvB. An RuvB hexamer assembles on each DNA strand where it exits the tetramer. Each RuvB hexamer is contacted by two RuvA subunits (via domain III) on 2 adjacent RuvB subunits; this complex drives branch migration. In the full resolvosome a probable DNA-RuvA(4)-RuvB(12)-RuvC(2) complex forms which resolves the HJ.

The protein resides in the cytoplasm. Functionally, the RuvA-RuvB-RuvC complex processes Holliday junction (HJ) DNA during genetic recombination and DNA repair, while the RuvA-RuvB complex plays an important role in the rescue of blocked DNA replication forks via replication fork reversal (RFR). RuvA specifically binds to HJ cruciform DNA, conferring on it an open structure. The RuvB hexamer acts as an ATP-dependent pump, pulling dsDNA into and through the RuvAB complex. HJ branch migration allows RuvC to scan DNA until it finds its consensus sequence, where it cleaves and resolves the cruciform DNA. In Thermotoga petrophila (strain ATCC BAA-488 / DSM 13995 / JCM 10881 / RKU-1), this protein is Holliday junction branch migration complex subunit RuvA.